Reading from the N-terminus, the 160-residue chain is Cytochrome b6-f complex subunit 4 (160 aa).

A run of 3 helical transmembrane segments spans residues 36–56 (LLYIFPVVIFGTFACVIGLSV), 95–115 (LLGVLLMAAVPAGLLTVPFIE), and 131–151 (TVFLIGTVAAIWLGIGAALPI).

This sequence belongs to the cytochrome b family. PetD subfamily. As to quaternary structure, the 4 large subunits of the cytochrome b6-f complex are cytochrome b6, subunit IV (17 kDa polypeptide, petD), cytochrome f and the Rieske protein, while the 4 small subunits are petG, petL, petM and petN. The complex functions as a dimer.

The protein resides in the plastid. It is found in the chloroplast thylakoid membrane. In terms of biological role, component of the cytochrome b6-f complex, which mediates electron transfer between photosystem II (PSII) and photosystem I (PSI), cyclic electron flow around PSI, and state transitions. The protein is Cytochrome b6-f complex subunit 4 of Chlorella vulgaris (Green alga).